Consider the following 219-residue polypeptide: Flagellin B4 (219 aa).

Positions 1 to 5 (MHRKG) are excised as a propeptide.

Belongs to the archaeal flagellin family.

The protein resides in the archaeal flagellum. Its function is as follows. Flagellin is the subunit protein which polymerizes to form the filaments of archaeal flagella. The chain is Flagellin B4 (flaB4) from Pyrococcus abyssi (strain GE5 / Orsay).